Consider the following 307-residue polypeptide: tRNA pseudouridine synthase B (307 aa).

Asp-38 functions as the Nucleophile in the catalytic mechanism.

This sequence belongs to the pseudouridine synthase TruB family. Type 1 subfamily.

The catalysed reaction is uridine(55) in tRNA = pseudouridine(55) in tRNA. In terms of biological role, responsible for synthesis of pseudouridine from uracil-55 in the psi GC loop of transfer RNAs. This chain is tRNA pseudouridine synthase B, found in Bacillus cereus (strain ATCC 14579 / DSM 31 / CCUG 7414 / JCM 2152 / NBRC 15305 / NCIMB 9373 / NCTC 2599 / NRRL B-3711).